The primary structure comprises 596 residues: Elongation factor 4 (596 aa).

The 183-residue stretch at 2–184 (SHIRNFSIIA…RLVHTIPAPE (183 aa)) folds into the tr-type G domain. GTP-binding positions include 14-19 (DHGKST) and 131-134 (NKMD).

Belongs to the TRAFAC class translation factor GTPase superfamily. Classic translation factor GTPase family. LepA subfamily.

It localises to the cell inner membrane. It carries out the reaction GTP + H2O = GDP + phosphate + H(+). In terms of biological role, required for accurate and efficient protein synthesis under certain stress conditions. May act as a fidelity factor of the translation reaction, by catalyzing a one-codon backward translocation of tRNAs on improperly translocated ribosomes. Back-translocation proceeds from a post-translocation (POST) complex to a pre-translocation (PRE) complex, thus giving elongation factor G a second chance to translocate the tRNAs correctly. Binds to ribosomes in a GTP-dependent manner. The protein is Elongation factor 4 of Pseudomonas putida (strain GB-1).